The sequence spans 379 residues: MEQLSSANTRFALDLFLALSENNPAGNIFISPFSISSAMAMVFLGTRGNTAAQLSKTFHFNTVEEVHSRFQSLNADINKRGASYILKLANRLYGEKTYNFLPEFLVSTQKTYGADLASVDFQHASEDARKTINQWVKGQTEGKIPELLASGMVDNMTKLVLVNAIYFKGNWKDKFMKEATTNAPFRLNKKDRKTVKMMYQKKKFAYGYIEDLKCRVLELPYQGEELSMVILLPDDIEDESTGLKKIEEQLTLEKLHEWTKPENLDFIEVNVSLPRFKLEESYTLNSDLARLGVQDLFNSSKADLSGMSGARDIFISKIVHKSFVEVNEEGTEAAAATAGIATFCMLMPEENFTADHPFLFFIRHNSSGSILFLGRFSSP.

The residue at position 1 (methionine 1) is an N-acetylmethionine. 2 positions are modified to N6-acetyllysine: lysine 137 and lysine 177. Serine 300 is subject to Phosphoserine. The interval 351–379 (NFTADHPFLFFIRHNSSGSILFLGRFSSP) is CARD-binding motif (CBM).

It belongs to the serpin family. Ov-serpin subfamily. Monomer. Interacts (via C-terminus) with CASP1; CASP4 (via CARD domain) and CASP5; these interactions regulate the activity of inflammatory caspases. Interacts with PRTN3. Interacts with GZMH. In human bone marrow, present in all CD45+ populations. Expression levels are highest in the neutrophil lineage, intermediate in monocytic, and lowest in lymphocytic lineage. Within the neutrophil lineage, expression is highest in promyelocytes.

It localises to the secreted. It is found in the cytoplasm. The protein resides in the cytolytic granule. The protein localises to the early endosome. Neutrophil serine protease inhibitor that plays an essential role in the regulation of the innate immune response, inflammation and cellular homeostasis. Acts primarily to protect the cell from proteases released in the cytoplasm during stress or infection. These proteases are important in killing microbes but when released from granules, these potent enzymes also destroy host proteins and contribute to mortality. Regulates the activity of the neutrophil proteases elastase, cathepsin G, proteinase-3, chymase, chymotrypsin, and kallikrein-3. Also acts as a potent intracellular inhibitor of GZMH by directly blocking its proteolytic activity. During inflammation, limits the activity of inflammatory caspases CASP1, CASP4 and CASP5 by suppressing their caspase-recruitment domain (CARD) oligomerization and enzymatic activation. When secreted, promotes the proliferation of beta-cells via its protease inhibitory function. This Homo sapiens (Human) protein is Leukocyte elastase inhibitor (SERPINB1).